A 203-amino-acid chain; its full sequence is Urease accessory protein UreG (203 aa).

Residue 13-20 (GPVGSGKT) coordinates GTP.

It belongs to the SIMIBI class G3E GTPase family. UreG subfamily. Homodimer. UreD, UreF and UreG form a complex that acts as a GTP-hydrolysis-dependent molecular chaperone, activating the urease apoprotein by helping to assemble the nickel containing metallocenter of UreC. The UreE protein probably delivers the nickel.

It localises to the cytoplasm. Facilitates the functional incorporation of the urease nickel metallocenter. This process requires GTP hydrolysis, probably effectuated by UreG. In Psychromonas ingrahamii (strain DSM 17664 / CCUG 51855 / 37), this protein is Urease accessory protein UreG.